Here is an 85-residue protein sequence, read N- to C-terminus: U4-theraphotoxin-Hhn1z (85 aa).

An N-terminal signal peptide occupies residues 1-22 (MKMTLIAILTCAAVLVLHTTAA). The propeptide occupies 23–48 (EELEAESQLMEVGMPDTELEAVDEER). 3 disulfide bridges follow: cysteine 52–cysteine 66, cysteine 56–cysteine 77, and cysteine 71–cysteine 82.

It belongs to the neurotoxin 12 (Hwtx-2) family. 02 (Hwtx-2) subfamily. As to expression, expressed by the venom gland.

Its subcellular location is the secreted. Its function is as follows. Postsynaptic neurotoxin. The sequence is that of U4-theraphotoxin-Hhn1z from Cyriopagopus hainanus (Chinese bird spider).